Consider the following 204-residue polypeptide: Lipid A acyltransferase PagP (204 aa).

Residues 1 to 25 (MSYKHLISACIFSSLCLGQVNAVLA) form the signal peptide. Catalysis depends on residues histidine 76, aspartate 119, and serine 120.

It belongs to the lipid A palmitoyltransferase family. Homodimer.

It is found in the cell outer membrane. It catalyses the reaction a lipid A + a 1,2-diacyl-sn-glycero-3-phosphocholine = a hepta-acyl lipid A + a 2-acyl-sn-glycero-3-phosphocholine. The catalysed reaction is a lipid IVA + a 1,2-diacyl-sn-glycero-3-phosphocholine = a lipid IVB + a 2-acyl-sn-glycero-3-phosphocholine. It carries out the reaction a lipid IIA + a 1,2-diacyl-sn-glycero-3-phosphocholine = a lipid IIB + a 2-acyl-sn-glycero-3-phosphocholine. In terms of biological role, transfers a fatty acid residue from the sn-1 position of a phospholipid to the N-linked hydroxyfatty acid chain on the proximal unit of lipid A or its precursors. This Yersinia enterocolitica serotype O:8 / biotype 1B (strain NCTC 13174 / 8081) protein is Lipid A acyltransferase PagP.